Here is a 121-residue protein sequence, read N- to C-terminus: Amelogenin (121 aa).

Disordered stretches follow at residues 1-20 (LHHQ…HALQ) and 32-121 (QPMQ…WPAT). Over residues 48–58 (SVTPTQHHQSN) the composition is skewed to polar residues. Low complexity predominate over residues 59–71 (LPQPAQQPFQPQV). The span at 85-111 (PAHPMPPMPQPPLPPMFPMQPLPPLLP) shows a compositional bias: pro residues.

This sequence belongs to the amelogenin family.

It is found in the secreted. Its subcellular location is the extracellular space. It localises to the extracellular matrix. Functionally, plays a role in the biomineralization of teeth. Seems to regulate the formation of crystallites during the secretory stage of tooth enamel development. Thought to play a major role in the structural organization and mineralization of developing enamel. This Ornithorhynchus anatinus (Duckbill platypus) protein is Amelogenin (AMEL).